The following is a 384-amino-acid chain: 23S rRNA (uracil(747)-C(5))-methyltransferase RlmC (384 aa).

Residues Cys7, Cys15, Cys18, and Cys94 each contribute to the [4Fe-4S] cluster site. Gln219, Phe248, Glu269, and Asn316 together coordinate S-adenosyl-L-methionine. Catalysis depends on Cys343, which acts as the Nucleophile.

It belongs to the class I-like SAM-binding methyltransferase superfamily. RNA M5U methyltransferase family. RlmC subfamily.

The catalysed reaction is uridine(747) in 23S rRNA + S-adenosyl-L-methionine = 5-methyluridine(747) in 23S rRNA + S-adenosyl-L-homocysteine + H(+). Functionally, catalyzes the formation of 5-methyl-uridine at position 747 (m5U747) in 23S rRNA. This chain is 23S rRNA (uracil(747)-C(5))-methyltransferase RlmC, found in Shewanella sp. (strain MR-4).